Here is a 456-residue protein sequence, read N- to C-terminus: Adenylosuccinate synthetase isozyme 2 (456 aa).

The segment at 1–24 is disordered; sequence MAFAETYPAASSLPNGDCGRPRAR. GTP is bound by residues 39–45 and 67–69; these read GDEGKGK and GHT. Asp40 functions as the Proton acceptor in the catalytic mechanism. Mg(2+) contacts are provided by Asp40 and Gly67. Asp40 contacts substrate. IMP-binding positions include 40–43, 65–68, Thr162, Arg176, Asn255, Thr270, and Arg334; these read DEGK and NAGH. His68 functions as the Proton donor in the catalytic mechanism. 330–336 contributes to the substrate binding site; the sequence is VTTGRKR. Residues Arg336, 362–364, and 444–447 contribute to the GTP site; these read KLD and GVGK.

This sequence belongs to the adenylosuccinate synthetase family. In terms of assembly, homodimer. It depends on Mg(2+) as a cofactor.

The protein resides in the cytoplasm. The protein localises to the mitochondrion. The catalysed reaction is IMP + L-aspartate + GTP = N(6)-(1,2-dicarboxyethyl)-AMP + GDP + phosphate + 2 H(+). It participates in purine metabolism; AMP biosynthesis via de novo pathway; AMP from IMP: step 1/2. Its activity is regulated as follows. Inhibited competitively by AMP and IMP and non-competitively by fructose 1,6-bisphosphate. In terms of biological role, plays an important role in the de novo pathway and in the salvage pathway of purine nucleotide biosynthesis. Catalyzes the first committed step in the biosynthesis of AMP from IMP. This Homo sapiens (Human) protein is Adenylosuccinate synthetase isozyme 2.